A 602-amino-acid polypeptide reads, in one-letter code: Elongation factor 4 (602 aa).

The tr-type G domain occupies 7-189 (KYIRNFSIVA…AIVNKVPAPD (183 aa)). Residues 19–24 (DHGKST) and 136–139 (NKID) each bind GTP.

This sequence belongs to the TRAFAC class translation factor GTPase superfamily. Classic translation factor GTPase family. LepA subfamily.

Its subcellular location is the cell membrane. The enzyme catalyses GTP + H2O = GDP + phosphate + H(+). Its function is as follows. Required for accurate and efficient protein synthesis under certain stress conditions. May act as a fidelity factor of the translation reaction, by catalyzing a one-codon backward translocation of tRNAs on improperly translocated ribosomes. Back-translocation proceeds from a post-translocation (POST) complex to a pre-translocation (PRE) complex, thus giving elongation factor G a second chance to translocate the tRNAs correctly. Binds to ribosomes in a GTP-dependent manner. This Clostridium botulinum (strain ATCC 19397 / Type A) protein is Elongation factor 4.